A 147-amino-acid chain; its full sequence is Peptide deformylase 1 (147 aa).

2 residues coordinate Fe cation: C90 and H132. E133 is an active-site residue. H136 contacts Fe cation.

This sequence belongs to the polypeptide deformylase family. It depends on Fe(2+) as a cofactor.

The enzyme catalyses N-terminal N-formyl-L-methionyl-[peptide] + H2O = N-terminal L-methionyl-[peptide] + formate. In terms of biological role, removes the formyl group from the N-terminal Met of newly synthesized proteins. Requires at least a dipeptide for an efficient rate of reaction. N-terminal L-methionine is a prerequisite for activity but the enzyme has broad specificity at other positions. The protein is Peptide deformylase 1 of Clostridium perfringens (strain 13 / Type A).